The sequence spans 249 residues: Olfactory receptor 1571 (249 aa).

Residues leucine 1–alanine 9 form a helical membrane-spanning segment. The Extracellular portion of the chain corresponds to aspartate 10–glutamine 40. An intrachain disulfide couples cysteine 37 to cysteine 119. Residues valine 41–tyrosine 60 traverse the membrane as a helical segment. The Cytoplasmic segment spans residues aspartate 61–glycine 82. A helical transmembrane segment spans residues leucine 83–alanine 103. Topologically, residues leucine 104–aspartate 136 are extracellular. Asparagine 130 is a glycosylation site (N-linked (GlcNAc...) asparagine). A helical transmembrane segment spans residues methionine 137–tyrosine 158. The Cytoplasmic segment spans residues serine 159–threonine 180. The chain crosses the membrane as a helical span at residues cysteine 181–leucine 200. Over serine 201–serine 210 the chain is Extracellular. Residues threonine 211–leucine 232 form a helical membrane-spanning segment. Residues arginine 233 to proline 249 are Cytoplasmic-facing.

It belongs to the G-protein coupled receptor 1 family. As to expression, tongue specific.

The protein localises to the cell membrane. Its function is as follows. Possible taste receptor. The protein is Olfactory receptor 1571 (Olr1571) of Rattus norvegicus (Rat).